Consider the following 1242-residue polypeptide: Structural polyprotein (1242 aa).

A disordered region spans residues 14–101 (WRPRMPPRPW…PKRKPGRRER (88 aa)). The segment covering 26 to 42 (RMPTMQRPDQQARQMQQ) has biased composition (low complexity). Residues 35–66 (QQARQMQQLIAAVSTLALRQNAAAPQRGKKKQ) are host transcription inhibition. The short motif at 59–96 (PQRGKKKQPRRKKPKPQPEKPKKQEQKPKQKKAPKRKP) is the Nuclear localization signal element. The segment covering 61–73 (RGKKKQPRRKKPK) has biased composition (basic residues). Residues 74–86 (PQPEKPKKQEQKP) show a composition bias toward basic and acidic residues. The segment at 82 to 111 (QEQKPKQKKAPKRKPGRRERMCMKIEHDCI) is binding to the viral RNA. The span at 87 to 98 (KQKKAPKRKPGR) shows a compositional bias: basic residues. Residues 96–110 (PGRRERMCMKIEHDC) form a ribosome-binding region. Cysteine 110 and cysteine 125 are joined by a disulfide. The region spanning 110–258 (CIFEVKHEGK…KITPEGTVEW (149 aa)) is the Peptidase S3 domain. The Charge relay system role is filled by histidine 136. The Nuclear export signal motif lies at 141–151 (IDNADLARLSY). An interaction with spike glycoprotein E2 region spans residues 152 to 157 (KKSSKY). Aspartate 158 functions as the Charge relay system in the catalytic mechanism. Residues 180 to 190 (PEGHYNWHYGA) form a dimerization of the capsid protein region. The active-site Charge relay system is the serine 210. Positions 216–220 (DNKGP) are dimerization of the capsid protein. A functions as an uncleaved signal peptide for the precursor of protein E3/E2 region spans residues 259-272 (AASTVTAMCLLTNI). Cystine bridges form between cysteine 267/cysteine 276, cysteine 281/cysteine 285, cysteine 284/cysteine 316, cysteine 343/cysteine 449, cysteine 346/cysteine 352, cysteine 415/cysteine 429, cysteine 477/cysteine 589, and cysteine 527/cysteine 544. An N-linked (GlcNAc...) asparagine; by host glycan is attached at asparagine 271. At 325–690 (STANHFNAYK…YYYGLHPTTT (366 aa)) the chain is on the extracellular side. Interaction with host Mxra8 receptor regions lie at residues 350–353 (HSCH) and 386–388 (HDH). Interaction with host Mxra8 receptor stretches follow at residues 508 to 511 (QSGN) and 540 to 546 (TINSCTV). Asparagine 586 carries an N-linked (GlcNAc...) asparagine; by host glycan. A helical membrane pass occupies residues 691-711 (IVVVIRVSVVVLLSFAASVYM). At 712-746 (CVVARTKCLTPYALTPGAVVPVTIGVLCCAPKAHA) the chain is on the cytoplasmic side. The tract at residues 714-718 (VARTK) is interaction with the capsid protein. Residues cysteine 719, cysteine 739, and cysteine 740 are each lipidated (S-palmitoyl cysteine; by host). The segment at 719-739 (CLTPYALTPGAVVPVTIGVLC) is transient transmembrane before p62-6K protein processing. Cysteine 719 and cysteine 740 are disulfide-bonded. The Extracellular portion of the chain corresponds to 747-761 (ASFAEGMAYLWDNNQ). Asparagine 760 is a glycosylation site (N-linked (GlcNAc...) asparagine; by host). The helical transmembrane segment at 762-782 (SMFWMELTGPLALLILATCCA) threads the bilayer. The Cytoplasmic segment spans residues 783-785 (RSL). A helical membrane pass occupies residues 786–806 (LSCCKGSFLVAMSIGSAVASA). At 807-1217 (YEHTAIIPNQ…STAMTWAQHL (411 aa)) the chain is on the extracellular side. 4 cysteine pairs are disulfide-bonded: cysteine 855/cysteine 920, cysteine 868/cysteine 900, cysteine 869/cysteine 902, and cysteine 874/cysteine 884. Residues 890–907 (VYPFMWGGAYCFCDSENT) are E1 fusion peptide loop. N-linked (GlcNAc...) asparagine; by host glycosylation is found at asparagine 947 and asparagine 1076. Intrachain disulfides connect cysteine 1065/cysteine 1077, cysteine 1107/cysteine 1180, cysteine 1112/cysteine 1184, and cysteine 1134/cysteine 1174. A helical membrane pass occupies residues 1218–1238 (AGGVGLLIALAVLILVIVTCV). The S-palmitoyl cysteine; by host moiety is linked to residue cysteine 1237. The Cytoplasmic portion of the chain corresponds to 1239-1242 (TLRR).

Homodimer. Homomultimer. Interacts with host karyopherin KPNA4; this interaction allows the nuclear import of the viral capsid protein. Interacts with spike glycoprotein E2. Interacts with host IRAK1; the interaction leads to inhibition of IRAK1-dependent signaling. As to quaternary structure, the precursor of protein E3/E2 and E1 form a heterodimer shortly after synthesis. In terms of assembly, the precursor of protein E3/E2 and E1 form a heterodimer shortly after synthesis. Processing of the precursor of protein E3/E2 into E2 and E3 results in a heterodimer of the spike glycoproteins E2 and E1. Spike at virion surface are constituted of a trimer of E2-E1 heterodimers. After target cell attachment and endocytosis, E1 change conformation to form homotrimers. Interacts with 6K protein. Interacts with spike glycoprotein E1. Processing of the precursor of protein E3/E2 into E2 and E3 results in a heterodimer of the spike glycoproteins E2 and E1. Spike at virion surface are constituted of a trimer of E2-E1 heterodimers. Interacts with 6K protein. Interacts with host MXRA8; this interaction mediates virus entry. As to quaternary structure, oligomer. Interacts with spike glycoprotein E1. Interacts with spike glycoprotein E2. In terms of processing, structural polyprotein: Specific enzymatic cleavages in vivo yield mature proteins. Capsid protein is auto-cleaved during polyprotein translation, unmasking a signal peptide at the N-terminus of the precursor of E3/E2. The remaining polyprotein is then targeted to the host endoplasmic reticulum, where host signal peptidase cleaves it into pE2, 6K and E1 proteins. pE2 is further processed to mature E3 and E2 by host furin in trans-Golgi vesicle. Post-translationally, palmitoylated via thioester bonds. These palmitoylations may induce disruption of the C-terminus transmembrane. This would result in the reorientation of E2 C-terminus from lumenal to cytoplasmic side. N-glycosylated. In terms of processing, palmitoylated via thioester bonds.

The protein localises to the virion. Its subcellular location is the host cytoplasm. The protein resides in the host cell membrane. It localises to the host nucleus. It is found in the virion membrane. The protein localises to the host Golgi apparatus. Its subcellular location is the host trans-Golgi network. The protein resides in the host endoplasmic reticulum. The enzyme catalyses Autocatalytic release of the core protein from the N-terminus of the togavirus structural polyprotein by hydrolysis of a -Trp-|-Ser- bond.. In terms of biological role, forms an icosahedral capsid with a T=4 symmetry composed of 240 copies of the capsid protein surrounded by a lipid membrane through which penetrate 80 spikes composed of trimers of E1-E2 heterodimers. The capsid protein binds to the viral RNA genome at a site adjacent to a ribosome binding site for viral genome translation following genome release. Possesses a protease activity that results in its autocatalytic cleavage from the nascent structural protein. Following its self-cleavage, the capsid protein transiently associates with ribosomes, and within several minutes the protein binds to viral RNA and rapidly assembles into icosahedric core particles. The resulting nucleocapsid eventually associates with the cytoplasmic domain of the spike glycoprotein E2 at the cell membrane, leading to budding and formation of mature virions. In case of infection, new virions attach to target cells and after clathrin-mediated endocytosis their membrane fuses with the host endosomal membrane. This leads to the release of the nucleocapsid into the cytoplasm, followed by an uncoating event necessary for the genomic RNA to become accessible. The uncoating might be triggered by the interaction of capsid proteins with ribosomes. Binding of ribosomes would release the genomic RNA since the same region is genomic RNA-binding and ribosome-binding. Specifically inhibits interleukin-1 receptor-associated kinase 1/IRAK1-dependent signaling during viral entry, representing a means by which the alphaviruses may evade innate immune detection and activation prior to viral gene expression. Provides the signal sequence for the translocation of the precursor of protein E3/E2 to the host endoplasmic reticulum. Furin-cleaved E3 remains associated with spike glycoprotein E1 and mediates pH protection of the latter during the transport via the secretory pathway. After virion release from the host cell, the assembly protein E3 is gradually released in the extracellular space. Functionally, plays a role in viral attachment to target host cell, by binding to the cell receptor MXRA8. Synthesized as a p62 precursor which is processed by furin at the cell membrane just before virion budding, giving rise to E2-E1 heterodimer. The p62-E1 heterodimer is stable, whereas E2-E1 is unstable and dissociate at low pH. p62 is processed at the last step, presumably to avoid E1 fusion activation before its final export to cell surface. E2 C-terminus contains a transitory transmembrane that would be disrupted by palmitoylation, resulting in reorientation of the C-terminal tail from lumenal to cytoplasmic side. This step is critical since E2 C-terminus is involved in budding by interacting with capsid proteins. This release of E2 C-terminus in cytoplasm occurs lately in protein export, and precludes premature assembly of particles at the endoplasmic reticulum membrane. Its function is as follows. Acts as a viroporin that participates in virus glycoprotein processing and transport to the plasma membrane, cell permeabilization and budding of viral particles. Disrupts the calcium homeostasis of the cell, probably at the endoplasmic reticulum level. This leads to cytoplasmic calcium elevation. Because of its lipophilic properties, the 6K protein is postulated to influence the selection of lipids that interact with the transmembrane domains of the glycoproteins, which, in turn, affects the deformability of the bilayer required for the extreme curvature that occurs as budding proceeds. Present in low amount in virions, about 3% compared to viral glycoproteins. In terms of biological role, class II viral fusion protein. Fusion activity is inactive as long as E1 is bound to E2 in mature virion. After virus attachment to target cell via host MXRA8 and endocytosis, acidification of the endosome induce dissociation of E1/E2 heterodimer and concomitant trimerization of the E1 subunits. This E1 trimer is fusion active, and promotes release of viral nucleocapsid in cytoplasm after endosome and viral membrane fusion. Efficient fusion requires the presence of cholesterol and sphingolipid in the target membrane. In Mayaro virus (strain Brazil) (MAYV), this protein is Structural polyprotein.